The primary structure comprises 351 residues: N-formyl peptide receptor 2 (351 aa).

Over 1–27 (METNFSTPLNEYEEVSYESAGYTVLRI) the chain is Extracellular. Asparagine 4 carries N-linked (GlcNAc...) asparagine glycosylation. A helical membrane pass occupies residues 28–50 (LPLVVLGVTFVLGVLGNGLVIWV). Over 51–61 (AGFRMTRTVTT) the chain is Cytoplasmic. Residues 62–83 (ICYLNLALADFSFTATLPFLIV) form a helical membrane-spanning segment. The Extracellular segment spans residues 84 to 100 (SMAMGEKWPFGWFLCKL). A disulfide bond links cysteine 98 and cysteine 176. Residues 101–121 (IHIVVDINLFGSVFLIGFIAL) traverse the membrane as a helical segment. The Cytoplasmic portion of the chain corresponds to 122–140 (DRCICVLHPVWAQNHRTVS). The chain crosses the membrane as a helical span at residues 141–162 (LAMKVIVGPWILALVLTLPVFL). Over 163-205 (FLTTVTIPNGDTYCTFNFASWGGTPEERLKVAITMLTARGIIR) the chain is Extracellular. Residues 206–226 (FVIGFSLPMSIVAICYGLIAA) form a helical membrane-spanning segment. At 227-242 (KIHKKGMIKSSRPLRV) the chain is on the cytoplasmic side. The chain crosses the membrane as a helical span at residues 243–266 (LTAVVASFFICWFPFQLVALLGTV). The Extracellular segment spans residues 267-286 (WLKEMLFYGKYKIIDILVNP). Residues 287–306 (TSSLAFFNSCLNPMLYVFVG) form a helical membrane-spanning segment. The Cytoplasmic portion of the chain corresponds to 307 to 351 (QDFRERLIHSLPTSLERALSEDSAPTNDTAANSASPPAETELQAM). The disordered stretch occupies residues 325 to 351 (LSEDSAPTNDTAANSASPPAETELQAM). Over residues 329 to 341 (SAPTNDTAANSAS) the composition is skewed to polar residues.

The protein belongs to the G-protein coupled receptor 1 family. As to quaternary structure, interacts with Amyloid-beta protein 42, product of APP; the interaction takes place at the cell surface and the complex is then rapidly internalized. (Microbial infection) Interacts with Staphylococcus aureus protein SSL13; this interaction leads to the activation of neutrophils. In terms of tissue distribution, detected in lung, bone marrow, neutrophils, spleen and testis.

The protein localises to the cell membrane. Low affinity receptor for N-formyl-methionyl peptides, which are powerful neutrophil chemotactic factors. Binding of FMLP to the receptor causes activation of neutrophils. This response is mediated via a G-protein that activates a phosphatidylinositol-calcium second messenger system. The activation of LXA4R could result in an anti-inflammatory outcome counteracting the actions of pro-inflammatory signals such as LTB4 (leukotriene B4). Receptor for the chemokine-like protein FAM19A5, mediating FAM19A5-stimulated macrophage chemotaxis and the inhibitory effect on TNFSF11/RANKL-induced osteoclast differentiation. Acts as a receptor for humanin. The protein is N-formyl peptide receptor 2 (FPR2) of Homo sapiens (Human).